The primary structure comprises 74 residues: Putative defensin-like protein 27 (74 aa).

A signal peptide spans 1-19 (MVHPRFVFFAFLALSVLLA). 4 disulfide bridges follow: cysteine 36–cysteine 74, cysteine 46–cysteine 65, cysteine 51–cysteine 70, and cysteine 55–cysteine 72.

Belongs to the DEFL family.

The protein localises to the secreted. The protein is Putative defensin-like protein 27 of Arabidopsis thaliana (Mouse-ear cress).